A 251-amino-acid chain; its full sequence is uncharacterized protein (251 aa).

In terms of domain architecture, Response regulatory spans 3–118; it reads KVVICDDERI…QLEHILDILV (116 aa). Asp55 is subject to 4-aspartylphosphate. In terms of domain architecture, HTH araC/xylS-type spans 152–249; it reads NQILSQIKQH…HMSPSDYNKL (98 aa). 2 consecutive DNA-binding regions (H-T-H motif) follow at residues 169-190 and 216-239; these read LDLI…KEHV and HYEI…KKYL.

Phosphorylated by SE_0166.

It localises to the cytoplasm. Functionally, probable member of the two-component regulatory system SE_0166/SE_0165. This is an uncharacterized protein from Staphylococcus epidermidis (strain ATCC 12228 / FDA PCI 1200).